Consider the following 284-residue polypeptide: L-ribulose-5-phosphate 3-epimerase UlaE (284 aa).

It belongs to the L-ribulose-5-phosphate 3-epimerase family.

The catalysed reaction is L-ribulose 5-phosphate = L-xylulose 5-phosphate. It functions in the pathway cofactor degradation; L-ascorbate degradation; D-xylulose 5-phosphate from L-ascorbate: step 3/4. Functionally, catalyzes the isomerization of L-xylulose-5-phosphate to L-ribulose-5-phosphate. Is involved in the anaerobic L-ascorbate utilization. The polypeptide is L-ribulose-5-phosphate 3-epimerase UlaE (Shigella boydii serotype 18 (strain CDC 3083-94 / BS512)).